The sequence spans 839 residues: Probable beta-glucosidase I (839 aa).

Residue Asn197 is glycosylated (N-linked (GlcNAc...) asparagine). Asp225 is a catalytic residue. One can recognise a PA14 domain in the interval 395 to 555; it reads DGKKGFSFRV…SQEELIAKAA (161 aa).

This sequence belongs to the glycosyl hydrolase 3 family.

It localises to the secreted. The catalysed reaction is Hydrolysis of terminal, non-reducing beta-D-glucosyl residues with release of beta-D-glucose.. It functions in the pathway glycan metabolism; cellulose degradation. Its function is as follows. Beta-glucosidases are one of a number of cellulolytic enzymes involved in the degradation of cellulosic biomass. Catalyzes the last step releasing glucose from the inhibitory cellobiose. This chain is Probable beta-glucosidase I (bglI), found in Aspergillus terreus (strain NIH 2624 / FGSC A1156).